The chain runs to 526 residues: ATP synthase subunit alpha (526 aa).

Residue 171–178 (GDRQTGKT) participates in ATP binding.

The protein belongs to the ATPase alpha/beta chains family. In terms of assembly, F-type ATPases have 2 components, CF(1) - the catalytic core - and CF(0) - the membrane proton channel. CF(1) has five subunits: alpha(3), beta(3), gamma(1), delta(1), epsilon(1). CF(0) has four main subunits: a(1), b(1), b'(1) and c(9-12).

The protein localises to the cell inner membrane. The enzyme catalyses ATP + H2O + 4 H(+)(in) = ADP + phosphate + 5 H(+)(out). Produces ATP from ADP in the presence of a proton gradient across the membrane. The alpha chain is a regulatory subunit. The polypeptide is ATP synthase subunit alpha (Chlorobaculum tepidum (strain ATCC 49652 / DSM 12025 / NBRC 103806 / TLS) (Chlorobium tepidum)).